The sequence spans 1370 residues: Putative surface protein SA2285 (1370 aa).

Positions 1 to 50 (MRDKKGPVNKRVDFLSNKLNKYSIRKFTVGTASILIGSLMYLGTQQEAEA) are cleaved as a signal peptide. Disordered stretches follow at residues 77–116 (NKDTAPQGVEAKSEVTSNKDTIEHEASVKAEDISKKEDTP), 439–472 (KFNPDLAPGTEKVTREGQKGEKTITTPTLKNPLT), and 495–1344 (EYGP…TGLE). 24 stretches are compositionally biased toward basic and acidic residues: residues 96 to 116 (DTIEHEASVKAEDISKKEDTP), 450 to 460 (KVTREGQKGEK), 504 to 522 (GHRDEFDPKLPTGEKEEVP), 553 to 569 (SIVEKEEIPFEKERKFN), 578 to 588 (KVTREGQKGEK), 605 to 618 (SKGESKEEITKDPI), 632 to 650 (GHRDEFDPKLPTGEKEEVP), 681 to 697 (SIVEKEEIPFEKERKFN), 706 to 716 (KVTREGQKGEK), 733 to 746 (SKGESKEEITKDPI), 760 to 778 (GHRDEFDPKLPTGEKEEVP), 809 to 825 (SIVEKEEIPFEKERKFN), 834 to 844 (KVTREGQKGEK), 861 to 874 (SKGESKEEITKDPI), 888 to 906 (GHRDEFDPKLPTGEKEEVP), 937 to 953 (SIVEKEEIPFKKERKFN), 962 to 972 (KVTREGQKGEK), 989 to 1002 (SKGESKEEITKDPI), 1016 to 1034 (GHRDEFDPKLPTGEKEEVP), 1065 to 1081 (SIVEKEEIPFEKERKFN), 1090 to 1100 (KVTREGQKGEK), 1117 to 1130 (SKGESKEEITKDPV), 1174 to 1185 (KVIEEPVDDVIK), and 1202 to 1221 (FETKREFNPKLQPGEERVKQ). The region spanning 418–500 (SAKNNNRIRK…NELTEYGPET (83 aa)) is the G5 1 domain. The 83-residue stretch at 546–628 (YGPVKGDSIV…NELTEYGPET (83 aa)) folds into the G5 2 domain. A G5 3 domain is found at 674 to 756 (YGPVKGDSIV…NELTEYGPET (83 aa)). One can recognise a G5 4 domain in the interval 802 to 884 (YGPVKGDSIV…NELTEYGPET (83 aa)). One can recognise a G5 5 domain in the interval 930 to 1012 (YGPVKGDSIV…NELTEYGPET (83 aa)). A G5 6 domain is found at 1058–1140 (YGPVKGDSIV…NELTEFGGEK (83 aa)). The G5 7 domain occupies 1186–1268 (HGPKTGTPET…DKIVEFGGEK (83 aa)). Positions 1224-1238 (QPGSKTITTPITVNP) are enriched in polar residues. A compositionally biased stretch (basic and acidic residues) spans 1252–1282 (EITKQPVDKIVEFGGEKPKDPKGPENPEKPS). The LPXTG sorting signal signature appears at 1338 to 1342 (LPKTG). At T1341 the chain carries Pentaglycyl murein peptidoglycan amidated threonine. The propeptide at 1342–1370 (GLESTQKGLIFSSIIGIAGLMLLARRRKN) is removed by sortase.

It is found in the secreted. The protein resides in the cell wall. The protein is Putative surface protein SA2285 of Staphylococcus aureus (strain N315).